Here is a 605-residue protein sequence, read N- to C-terminus: MGVSFSCPFAEQDDVEAALDSVTVKSISFGDDDECKTPKRSVNFNDGTLEPTILKSMGSGKMVVEKSVSLKGMQLERMISLNRSVKDNGFEIAKEFSVLDPRNPKHEAAIKLQKVYKSFRTRRKLADCAVLVEQSWWKLLDFAELKRSSISFFDIEKHETAISRWSRARTRAAKVGKGLSKNGKAQKLALQHWLEAIDPRHRYGHNLHFYYNKWLHCQSREPFFYWLDIGEGKEVNLVEKCPRLKLQQQCIKYLGPMERKAYEVVVEDGKFFYKHSGEILQTSDMEDSESKWIFVLSTSKVLYVGKKKKGTFQHSSFLAGGATVAAGRLVVENGVLKAVWPHSGHYQPTEENFMDFLSFLRENDVDITDVKMSPTDEDEFSIYKQRSTHMRNHSLEEDLEAEKTISFQDKVDPSGEEQTLMRNESISRKQSDLETPEKMESFSTFGDEIQSVGSKSTKVSEDYDSGDDEEEEEEMFELEQESMPSEQSSPRGEEKEEGETKESEVVKITEESILKRINSKKETKSFQLGKQLSCKWTTGAGPRIGCVRDYPSELQFQALEQVNLSPRSASVSRLCFSSSSQTQTPQMSPLWRGMSLPTDITLTNS.

In terms of domain architecture, IQ spans lysine 105 to glutamine 134. The segment at glutamine 408–valine 505 is disordered. Basic and acidic residues predominate over residues serine 425–glutamate 440. Residues aspartate 462–glutamine 480 show a composition bias toward acidic residues. A compositionally biased stretch (low complexity) spans glutamate 481–proline 490. The span at arginine 491–valine 505 shows a compositional bias: basic and acidic residues.

In terms of tissue distribution, expressed in rosette and cauline leaves, stems, flowers and siliques, and at lower levels in roots.

It localises to the cytoplasm. It is found in the nucleus. In terms of biological role, may be involved in biotic and abiotic stress responses. In Arabidopsis thaliana (Mouse-ear cress), this protein is IQ domain-containing protein IQM2.